Here is a 160-residue protein sequence, read N- to C-terminus: Leptin (160 aa).

The N-terminal stretch at Met1 to Cys17 is a signal peptide. Cysteines 109 and 160 form a disulfide.

Belongs to the leptin family.

It is found in the secreted. Functionally, may function as part of a signaling pathway that acts to regulate the size of the body fat depot. The sequence is that of Leptin (lep) from Tetraodon nigroviridis (Spotted green pufferfish).